The primary structure comprises 232 residues: Large ribosomal subunit protein uL16m (232 aa).

Residues 1–41 constitute a mitochondrion transit peptide; sequence MFPYLTRMNLSIKMGGLTLKESSPNAFLNNTTIARRFKHEY.

It belongs to the universal ribosomal protein uL16 family. As to quaternary structure, component of the mitochondrial large ribosomal subunit (mt-LSU). Mature yeast 74S mitochondrial ribosomes consist of a small (37S) and a large (54S) subunit. The 37S small subunit contains a 15S ribosomal RNA (15S mt-rRNA) and 34 different proteins. The 54S large subunit contains a 21S rRNA (21S mt-rRNA) and 46 different proteins.

The protein localises to the mitochondrion. Its function is as follows. Component of the mitochondrial ribosome (mitoribosome), a dedicated translation machinery responsible for the synthesis of mitochondrial genome-encoded proteins, including at least some of the essential transmembrane subunits of the mitochondrial respiratory chain. The mitoribosomes are attached to the mitochondrial inner membrane and translation products are cotranslationally integrated into the membrane. The sequence is that of Large ribosomal subunit protein uL16m (MRPL16) from Saccharomyces cerevisiae (strain ATCC 204508 / S288c) (Baker's yeast).